The chain runs to 381 residues: Dual-specificity RNA methyltransferase RlmN (381 aa).

Glutamate 95 (proton acceptor) is an active-site residue. Positions 101–339 (DGRRGTLCVS…MTTVRTTRGD (239 aa)) constitute a Radical SAM core domain. Cysteine 108 and cysteine 345 are disulfide-bonded. Residues cysteine 115, cysteine 119, and cysteine 122 each contribute to the [4Fe-4S] cluster site. S-adenosyl-L-methionine is bound by residues 169-170 (GE), serine 201, 223-225 (SLH), and asparagine 302. The S-methylcysteine intermediate role is filled by cysteine 345.

The protein belongs to the radical SAM superfamily. RlmN family. [4Fe-4S] cluster is required as a cofactor.

It is found in the cytoplasm. It catalyses the reaction adenosine(2503) in 23S rRNA + 2 reduced [2Fe-2S]-[ferredoxin] + 2 S-adenosyl-L-methionine = 2-methyladenosine(2503) in 23S rRNA + 5'-deoxyadenosine + L-methionine + 2 oxidized [2Fe-2S]-[ferredoxin] + S-adenosyl-L-homocysteine. It carries out the reaction adenosine(37) in tRNA + 2 reduced [2Fe-2S]-[ferredoxin] + 2 S-adenosyl-L-methionine = 2-methyladenosine(37) in tRNA + 5'-deoxyadenosine + L-methionine + 2 oxidized [2Fe-2S]-[ferredoxin] + S-adenosyl-L-homocysteine. Its function is as follows. Specifically methylates position 2 of adenine 2503 in 23S rRNA and position 2 of adenine 37 in tRNAs. m2A2503 modification seems to play a crucial role in the proofreading step occurring at the peptidyl transferase center and thus would serve to optimize ribosomal fidelity. This chain is Dual-specificity RNA methyltransferase RlmN, found in Alcanivorax borkumensis (strain ATCC 700651 / DSM 11573 / NCIMB 13689 / SK2).